Here is a 598-residue protein sequence, read N- to C-terminus: Jacalin-related lectin 17 (598 aa).

A disordered region spans residues 1–23; the sequence is MAQRLEAEGNKNFKGKSKWDDGS. Jacalin-type lectin domains follow at residues 2–148, 151–293, 295–445, and 452–595; these read AQRL…YVTW, PTKL…YFTT, PFTK…HFCP, and GEKV…HVLP.

The protein belongs to the jacalin lectin family.

This Arabidopsis thaliana (Mouse-ear cress) protein is Jacalin-related lectin 17 (JAL17).